The chain runs to 1056 residues: Outer capsid protein VP5 (1056 aa).

It belongs to the orthoreovirus lambda-2 protein family.

Its subcellular location is the virion. It carries out the reaction a 5'-end diphospho-ribonucleoside in mRNA + GTP + H(+) = a 5'-end (5'-triphosphoguanosine)-ribonucleoside in mRNA + diphosphate. It catalyses the reaction a 5'-end (5'-triphosphoguanosine)-ribonucleoside in mRNA + S-adenosyl-L-methionine = a 5'-end (N(7)-methyl 5'-triphosphoguanosine)-ribonucleoside in mRNA + S-adenosyl-L-homocysteine. Functionally, outer capsid protein involved in mRNA capping. Catalyzes the last 3 enzymatic activities for formation of the 5' cap structure on the viral plus-strand transcripts, namely the RNA guanylyltransferase, RNA-7N- and RNA-2'O-methyltransferase activities. The chain is Outer capsid protein VP5 (S5) from Aedes pseudoscutellaris reovirus (isolate France) (ApRV).